The primary structure comprises 204 residues: dTTP/UTP pyrophosphatase (204 aa).

The active-site Proton acceptor is the D76.

The protein belongs to the Maf family. YhdE subfamily. A divalent metal cation is required as a cofactor.

The protein resides in the cytoplasm. The catalysed reaction is dTTP + H2O = dTMP + diphosphate + H(+). The enzyme catalyses UTP + H2O = UMP + diphosphate + H(+). Nucleoside triphosphate pyrophosphatase that hydrolyzes dTTP and UTP. May have a dual role in cell division arrest and in preventing the incorporation of modified nucleotides into cellular nucleic acids. This Salinibacter ruber (strain DSM 13855 / M31) protein is dTTP/UTP pyrophosphatase.